Here is a 186-residue protein sequence, read N- to C-terminus: LSM12 homolog B (186 aa).

The region spanning methionine 1–alanine 74 is the Sm domain. The AD domain occupies glutamate 84–phenylalanine 186.

This sequence belongs to the LSM12 family. As to quaternary structure, interacts with Sbat; along with Sbat and Vlet, may form an accessory subcomplex involved in SMN complex function.

In terms of biological role, may have an accessory function in the survival motor neuron (SMN) complex. This is LSM12 homolog B from Drosophila melanogaster (Fruit fly).